A 307-amino-acid polypeptide reads, in one-letter code: Ubiquitin recognition factor in ER-associated degradation protein 1 (307 aa).

Met-1 is modified (N-acetylmethionine). 5 positions are modified to phosphoserine: Ser-129, Ser-231, Ser-245, Ser-247, and Ser-299. 2 disordered regions span residues 230-255 (GSGNRLDGKKKGVEPSPSPIKPGDIK) and 282-307 (EEDEAGGRFVAFSGEGQSLRKKGRKP).

It belongs to the UFD1 family. Interacts with USP13. Heterodimer with NPLOC4, this heterodimer binds VCP and inhibits Golgi membrane fusion. Interacts with ZFAND2B; probably through VCP.

It localises to the nucleus. It is found in the cytoplasm. Its subcellular location is the cytosol. It functions in the pathway protein degradation; proteasomal ubiquitin-dependent pathway. Its function is as follows. Essential component of the ubiquitin-dependent proteolytic pathway which degrades ubiquitin fusion proteins. The ternary complex containing UFD1, VCP and NPLOC4 binds ubiquitinated proteins and is necessary for the export of misfolded proteins from the ER to the cytoplasm, where they are degraded by the proteasome. The NPLOC4-UFD1-VCP complex regulates spindle disassembly at the end of mitosis and is necessary for the formation of a closed nuclear envelope. It may be involved in the development of some ectoderm-derived structures. Acts as a negative regulator of type I interferon production via the complex formed with VCP and NPLOC4, which binds to RIGI and recruits RNF125 to promote ubiquitination and degradation of RIGI. This Rattus norvegicus (Rat) protein is Ubiquitin recognition factor in ER-associated degradation protein 1.